Here is a 276-residue protein sequence, read N- to C-terminus: Putative pyruvate, phosphate dikinase regulatory protein (276 aa).

151–158 (GISRTSKT) is a binding site for ADP.

This sequence belongs to the pyruvate, phosphate/water dikinase regulatory protein family. PDRP subfamily.

The enzyme catalyses N(tele)-phospho-L-histidyl/L-threonyl-[pyruvate, phosphate dikinase] + ADP = N(tele)-phospho-L-histidyl/O-phospho-L-threonyl-[pyruvate, phosphate dikinase] + AMP + H(+). It carries out the reaction N(tele)-phospho-L-histidyl/O-phospho-L-threonyl-[pyruvate, phosphate dikinase] + phosphate + H(+) = N(tele)-phospho-L-histidyl/L-threonyl-[pyruvate, phosphate dikinase] + diphosphate. Bifunctional serine/threonine kinase and phosphorylase involved in the regulation of the pyruvate, phosphate dikinase (PPDK) by catalyzing its phosphorylation/dephosphorylation. In Streptococcus agalactiae serotype Ia (strain ATCC 27591 / A909 / CDC SS700), this protein is Putative pyruvate, phosphate dikinase regulatory protein.